Here is a 218-residue protein sequence, read N- to C-terminus: NAD(P)H-quinone oxidoreductase subunit I (218 aa).

2 4Fe-4S ferredoxin-type domains span residues 55–84 and 95–124; these read GRIH…VDWV and RNYS…MTEE. [4Fe-4S] cluster is bound by residues Cys-64, Cys-67, Cys-70, Cys-74, Cys-104, Cys-107, Cys-110, and Cys-114. Positions 169 to 218 are disordered; the sequence is MDPHDVPANQPRAGQLPAEALKSLSLQQESVQGDEGESLQDASDQDQPSG. The span at 208-218 shows a compositional bias: polar residues; the sequence is QDASDQDQPSG.

It belongs to the complex I 23 kDa subunit family. As to quaternary structure, NDH-1 is composed of at least 11 different subunits. [4Fe-4S] cluster serves as cofactor.

The protein resides in the cellular thylakoid membrane. The catalysed reaction is a plastoquinone + NADH + (n+1) H(+)(in) = a plastoquinol + NAD(+) + n H(+)(out). It catalyses the reaction a plastoquinone + NADPH + (n+1) H(+)(in) = a plastoquinol + NADP(+) + n H(+)(out). NDH-1 shuttles electrons from an unknown electron donor, via FMN and iron-sulfur (Fe-S) centers, to quinones in the respiratory and/or the photosynthetic chain. The immediate electron acceptor for the enzyme in this species is believed to be plastoquinone. Couples the redox reaction to proton translocation, and thus conserves the redox energy in a proton gradient. The protein is NAD(P)H-quinone oxidoreductase subunit I of Prochlorococcus marinus (strain MIT 9313).